Here is an 86-residue protein sequence, read N- to C-terminus: Colicin-E2 immunity protein (86 aa).

This sequence belongs to the colicins ColE2/ColE8/ColE9 and pyocins S1/S2 family.

Functionally, this protein is able to protect a cell, which harbors the plasmid ColE2 encoding colicin E2, against colicin E2. The polypeptide is Colicin-E2 immunity protein (imm) (Escherichia coli).